The following is a 237-amino-acid chain: Cysteine-rich venom protein DIS1 (237 aa).

The first 18 residues, 1 to 18 (MFVFILLSLAAVLQQSFG), serve as a signal peptide directing secretion. In terms of domain architecture, SCP spans 37–165 (VDKHNAFRRS…SYNYFYVCQY (129 aa)). 7 disulfides stabilise this stretch: C74-C152, C91-C166, C147-C163, C185-C192, C188-C197, C201-C234, and C219-C232. The 34-residue stretch at 201–234 (CSREDVFMNCKSLVAQSNCQDDYIRKNCPATCFC) folds into the ShKT domain.

It belongs to the CRISP family. In terms of tissue distribution, expressed by the venom gland.

It localises to the secreted. Weakly blocks contraction of smooth muscle elicited by high potassium-induced depolarization, but does not block caffeine-stimulated contraction. May target voltage-gated calcium channels on smooth muscle. The protein is Cysteine-rich venom protein DIS1 of Dispholidus typus (Boomslang).